The chain runs to 133 residues: DNA-directed RNA polymerase subunit omega (133 aa).

Belongs to the RNA polymerase subunit omega family. In terms of assembly, the RNAP catalytic core consists of 2 alpha, 1 beta, 1 beta' and 1 omega subunit. When a sigma factor is associated with the core the holoenzyme is formed, which can initiate transcription.

It carries out the reaction RNA(n) + a ribonucleoside 5'-triphosphate = RNA(n+1) + diphosphate. Promotes RNA polymerase assembly. Latches the N- and C-terminal regions of the beta' subunit thereby facilitating its interaction with the beta and alpha subunits. The protein is DNA-directed RNA polymerase subunit omega of Brucella canis (strain ATCC 23365 / NCTC 10854 / RM-666).